The chain runs to 234 residues: 5'-methylthioadenosine/S-adenosylhomocysteine nucleosidase (234 aa).

The Proton acceptor role is filled by Glu12. Substrate contacts are provided by residues Gly78, Ile152, and 173–174 (ME). Asp197 serves as the catalytic Proton donor.

It belongs to the PNP/UDP phosphorylase family. MtnN subfamily.

The enzyme catalyses S-adenosyl-L-homocysteine + H2O = S-(5-deoxy-D-ribos-5-yl)-L-homocysteine + adenine. The catalysed reaction is S-methyl-5'-thioadenosine + H2O = 5-(methylsulfanyl)-D-ribose + adenine. It carries out the reaction 5'-deoxyadenosine + H2O = 5-deoxy-D-ribose + adenine. It participates in amino-acid biosynthesis; L-methionine biosynthesis via salvage pathway; S-methyl-5-thio-alpha-D-ribose 1-phosphate from S-methyl-5'-thioadenosine (hydrolase route): step 1/2. Functionally, catalyzes the irreversible cleavage of the glycosidic bond in both 5'-methylthioadenosine (MTA) and S-adenosylhomocysteine (SAH/AdoHcy) to adenine and the corresponding thioribose, 5'-methylthioribose and S-ribosylhomocysteine, respectively. Also cleaves 5'-deoxyadenosine, a toxic by-product of radical S-adenosylmethionine (SAM) enzymes, into 5-deoxyribose and adenine. The polypeptide is 5'-methylthioadenosine/S-adenosylhomocysteine nucleosidase (Desulfotalea psychrophila (strain LSv54 / DSM 12343)).